An 813-amino-acid chain; its full sequence is Microtubule-associated protein 6 (813 aa).

S-palmitoyl cysteine attachment occurs at residues Cys5, Cys10, and Cys11. 3 disordered regions span residues 36-283 (ATEH…AAAD), 314-651 (VKPI…KDES), and 756-813 (PLKD…ESSP). The span at 41-50 (GAPPQPPPPQ) shows a compositional bias: pro residues. Residues 51-62 (QQAQPALAPPSA) show a composition bias toward low complexity. Residues 100–112 (GRSGPGPGLGSGS) show a composition bias toward gly residues. A Phosphoserine modification is found at Ser102. A mn 1 region spans residues 118 to 141 (DSVMRQDYRAWKVQRPEPSCRPRS). Positions 121–141 (MRQDYRAWKVQRPEPSCRPRS) are enriched in basic and acidic residues. Residues 126–140 (RAWKVQRPEPSCRPR) form a calmodulin-binding region. Tyr143 is subject to Phosphotyrosine. A compositionally biased stretch (basic and acidic residues) spans 149–173 (PFERETQYQKDFRAWPLPRRGDHPW). A mn 2 region spans residues 153-176 (ETQYQKDFRAWPLPRRGDHPWIPK). The interval 162 to 176 (AWPLPRRGDHPWIPK) is calmodulin-binding. Phosphoserine is present on Ser187. 4 calmodulin-binding regions span residues 189-203 (PILG…SQER), 306-320 (RAWT…IKAK), 357-371 (RRRI…FKEP), and 384-398 (PKKT…RKAK). Residues 298-321 (SSSYRNEFRAWTDIKPVKPIKAKP) are mn 3. The segment covering 367-376 (PFKEPPKVEK) has biased composition (basic and acidic residues). Positions 383–398 (KPKKTSASHKPTRKAK) are enriched in basic residues. Over residues 420 to 439 (KPDDKEQSKEMNNKLAEAKE) the composition is skewed to basic and acidic residues. The segment covering 443–454 (QPVSDSSKTQGP) has biased composition (polar residues). The segment covering 637-651 (KDQDPMVPEHPKDES) has biased composition (basic and acidic residues). A Phosphoserine modification is found at Ser812.

This sequence belongs to the STOP family. As to quaternary structure, interacts with calmodulin (via C-terminus); the interaction is dependent on Ca(2+). Interacts (via C-terminus) with TMEM106B (via N-terminus). Interacts with ZDHHC17 (via ANK repeats). Interacts with ZDHHC13 (via ANK repeats). Post-translationally, palmitoylated. Probably depalmitoylated by ABHD17A, ABHD17B and ABHD17C. During neuronal polarization, palmitoylation and depalmitoylation cycles regulate MAP6 shuttling between secretory vesicles and microtubules, and its polarized distribution in the axon. As to expression, expressed in brain (at protein level). Expressed in spinal cord. Isoform 2 expression is up-regulated in the prefrontal cortex (Brodmann's area 46) of patients with schizophrenia (postmortem brain study).

The protein localises to the cytoplasm. Its subcellular location is the cytoskeleton. It localises to the golgi apparatus. The protein resides in the cell projection. It is found in the axon. The protein localises to the dendrite. Its subcellular location is the cytoplasmic vesicle. It localises to the secretory vesicle membrane. Functionally, involved in microtubule stabilization in many cell types, including neuronal cells. Specifically has microtubule cold stabilizing activity. Involved in dendrite morphogenesis and maintenance by regulating lysosomal trafficking via its interaction with TMEM106B. Regulates KIF5A-mediated axonal cargo transport. Regulates axonal growth during neuron polarization. The sequence is that of Microtubule-associated protein 6 (MAP6) from Homo sapiens (Human).